Here is a 510-residue protein sequence, read N- to C-terminus: NAD(P)H-quinone oxidoreductase subunit 2 A, chloroplastic (510 aa).

The next 13 membrane-spanning stretches (helical) occupy residues 24–44 (LLLFHGSFIFPECILIFGLIL), 57–77 (IPWLYFISSTSLVMSITALLF), 99–119 (IFQFLILLCSTLCIPLSVEYI), 124–144 (MAITEFLLFVLTATLGGMFLC), 149–169 (LITIFVAPECFSLCSYLLSGY), 183–203 (YLLMGGASSSILVHGFSWLYG), 227–247 (PGISIALIFITVGIGFKLSPA), 295–315 (WHLLLEILAILSMILGNLIAI), 323–343 (MLAYSSIGQIGYVIIGIIVGD), 347–367 (GYASMITYMLFYISMNLGTFA), 395–415 (ALSSALCLLSLGGLPPLAGFF), 418–438 (LHLFWCGWQAGLYFLVSIGLL), and 484–504 (MIVCVIASTIPGISMNPIIAI).

It belongs to the complex I subunit 2 family. As to quaternary structure, NDH is composed of at least 16 different subunits, 5 of which are encoded in the nucleus.

Its subcellular location is the plastid. The protein resides in the chloroplast thylakoid membrane. The catalysed reaction is a plastoquinone + NADH + (n+1) H(+)(in) = a plastoquinol + NAD(+) + n H(+)(out). It catalyses the reaction a plastoquinone + NADPH + (n+1) H(+)(in) = a plastoquinol + NADP(+) + n H(+)(out). Its function is as follows. NDH shuttles electrons from NAD(P)H:plastoquinone, via FMN and iron-sulfur (Fe-S) centers, to quinones in the photosynthetic chain and possibly in a chloroplast respiratory chain. The immediate electron acceptor for the enzyme in this species is believed to be plastoquinone. Couples the redox reaction to proton translocation, and thus conserves the redox energy in a proton gradient. In Platanus occidentalis (Sycamore), this protein is NAD(P)H-quinone oxidoreductase subunit 2 A, chloroplastic.